A 279-amino-acid polypeptide reads, in one-letter code: Protease HtpX homolog (279 aa).

The next 2 helical transmembrane spans lie at 4-24 and 34-54; these read IFLFLATNIAVLVVINIVLAV and GSLLAYSAVVGFTGSIISLLM. Residue histidine 140 participates in Zn(2+) binding. The active site involves glutamate 141. Position 144 (histidine 144) interacts with Zn(2+). 2 helical membrane-spanning segments follow: residues 155–175 and 189–209; these read LIQGVVNTFVVFLSRIIANLI and FLVSMVFQILFGFLASLIVMW. Glutamate 215 contributes to the Zn(2+) binding site.

This sequence belongs to the peptidase M48B family. It depends on Zn(2+) as a cofactor.

It localises to the cell inner membrane. In Neisseria gonorrhoeae (strain ATCC 700825 / FA 1090), this protein is Protease HtpX homolog.